Consider the following 295-residue polypeptide: Probable aspartoacylase (295 aa).

Positions 16 and 19 each coordinate Zn(2+). Substrate-binding positions include Arg-58 and 65 to 66; that span reads NR. A Zn(2+)-binding site is contributed by His-107. Positions 166 and 277 each coordinate substrate.

The protein belongs to the AspA/AstE family. Aspartoacylase subfamily. It depends on Zn(2+) as a cofactor.

The enzyme catalyses an N-acyl-L-aspartate + H2O = a carboxylate + L-aspartate. The protein is Probable aspartoacylase of Acaryochloris marina (strain MBIC 11017).